Consider the following 127-residue polypeptide: DNA-directed RNA polymerase subunit omega (127 aa).

It belongs to the RNA polymerase subunit omega family. In terms of assembly, the RNAP catalytic core consists of 2 alpha, 1 beta, 1 beta' and 1 omega subunit. When a sigma factor is associated with the core the holoenzyme is formed, which can initiate transcription.

The enzyme catalyses RNA(n) + a ribonucleoside 5'-triphosphate = RNA(n+1) + diphosphate. Functionally, promotes RNA polymerase assembly. Latches the N- and C-terminal regions of the beta' subunit thereby facilitating its interaction with the beta and alpha subunits. The protein is DNA-directed RNA polymerase subunit omega of Rickettsia canadensis (strain McKiel).